We begin with the raw amino-acid sequence, 322 residues long: Solute carrier family 35 member B1 (322 aa).

Helical transmembrane passes span 12 to 32 (LRLPLCFLGVFVCYFYYGILQ), 51 to 71 (FALTLVFIQCVINAMFAKILI), 85 to 105 (WLYAACSVSYVGAMVSSNSAL), 136 to 156 (YPLAKYLCVLLIVAGVALFMY), 168 to 188 (TVGFGELLLLLSLTLDGLTGV), 210 to 230 (LWSTVLLGAGILFTGELWEFL), 243 to 263 (ILLFGLTSALGQSFIFMTVVY), and 285 to 305 (VILFANPISSMQWVGTVLVFL). The Di-lysine motif signature appears at 318 to 322 (KKTSH).

This sequence belongs to the nucleotide-sugar transporter family. SLC35B subfamily.

It localises to the endoplasmic reticulum membrane. It catalyses the reaction ADP(in) + ATP(out) = ADP(out) + ATP(in). The enzyme catalyses UDP(out) + ATP(in) = UDP(in) + ATP(out). It carries out the reaction UTP(out) + ATP(in) = UTP(in) + ATP(out). The catalysed reaction is dATP(out) + ATP(in) = dATP(in) + ATP(out). In terms of biological role, ATP:ADP antiporter that catalyzes the exchange of ATP and ADP across the endoplasmic reticulum (ER) membrane. Imports ATP from the cytosol to the ER lumen and exports ADP in the opposite direction. Regulates ER energy metabolism and protein biogenesis. Appears to be part of a calcium-dependent ER to cytosol low energy response axis, where calcium efflux from ER to the cytosol triggers ATP import into the ER lumen to maintain sufficient ATP supply. Provides ATP to ER chaperone HSPA5 that drives protein folding and trafficking in the ER. Can transport dATP, UTP or UDP in exchange for ATP, but the physiological relevance of this process remains to be established. The polypeptide is Solute carrier family 35 member B1 (Slc35b1) (Rattus norvegicus (Rat)).